We begin with the raw amino-acid sequence, 957 residues long: Glycine dehydrogenase (decarboxylating) (957 aa).

Lys708 bears the N6-(pyridoxal phosphate)lysine mark.

Belongs to the GcvP family. The glycine cleavage system is composed of four proteins: P, T, L and H. It depends on pyridoxal 5'-phosphate as a cofactor.

The enzyme catalyses N(6)-[(R)-lipoyl]-L-lysyl-[glycine-cleavage complex H protein] + glycine + H(+) = N(6)-[(R)-S(8)-aminomethyldihydrolipoyl]-L-lysyl-[glycine-cleavage complex H protein] + CO2. Its function is as follows. The glycine cleavage system catalyzes the degradation of glycine. The P protein binds the alpha-amino group of glycine through its pyridoxal phosphate cofactor; CO(2) is released and the remaining methylamine moiety is then transferred to the lipoamide cofactor of the H protein. In Shigella sonnei (strain Ss046), this protein is Glycine dehydrogenase (decarboxylating).